The following is a 281-amino-acid chain: Phosphonates import ATP-binding protein PhnC (281 aa).

The ABC transporter domain occupies Phe2–Lys245. Gly34–Ser41 contacts ATP.

Belongs to the ABC transporter superfamily. Phosphonates importer (TC 3.A.1.9.1) family. In terms of assembly, the complex is composed of two ATP-binding proteins (PhnC), two transmembrane proteins (PhnE) and a solute-binding protein (PhnD).

It is found in the cell inner membrane. The catalysed reaction is phosphonate(out) + ATP + H2O = phosphonate(in) + ADP + phosphate + H(+). In terms of biological role, part of the ABC transporter complex PhnCDE involved in phosphonates import. Responsible for energy coupling to the transport system. The protein is Phosphonates import ATP-binding protein PhnC of Rhizobium etli (strain ATCC 51251 / DSM 11541 / JCM 21823 / NBRC 15573 / CFN 42).